A 427-amino-acid chain; its full sequence is U1 small nuclear ribonucleoprotein 70 kDa (427 aa).

2 disordered regions span residues 82–102 (EPGD…SQKR) and 215–427 (RGRT…EYVR). Positions 93 to 102 (PEVELPSQKR) are enriched in basic and acidic residues. Residues 138–216 (KTLFVSRLNY…RRVLVDVERG (79 aa)) enclose the RRM domain. The segment covering 227–241 (LGGGLGTSRVGGGEE) has biased composition (gly residues). 2 stretches are compositionally biased toward basic and acidic residues: residues 257–402 (EPSR…RYDK) and 409–427 (RYER…EYVR). Serine 282 carries the phosphoserine modification.

Component of the spliceosome. Interacts with CYP63, U2AF35A, U2AF35B, SRZ21, RSZ22, SR34, SR45, SR45A and SCL33. Phosphorylated. The association and dissociation with SR45 is not affected by the phosphorylation status. As to expression, ubiquitous.

It is found in the nucleus speckle. Its subcellular location is the nucleus. The protein localises to the nucleoplasm. Its function is as follows. Mediates the splicing of pre-mRNA by binding to the loop I region of U1-snRNA. This chain is U1 small nuclear ribonucleoprotein 70 kDa (RNU1), found in Arabidopsis thaliana (Mouse-ear cress).